Reading from the N-terminus, the 487-residue chain is GlcNAc-binding protein A (487 aa).

Positions 1–29 (MKKLPNKSLIALALLSVSGASFGHGYVSA) are cleaved as a signal peptide. Positions 30 to 201 (YENGVAEGRA…SFYNVIDVKF (172 aa)) constitute a Chitin-binding type-4 domain. In terms of domain architecture, Chitin-binding type-3 spans 438–479 (AGTKVLASDGAVYQCKEFPFSGYCTQWSPSATQFEPGKGSHW).

This sequence belongs to the GbpA family.

The protein resides in the secreted. Functionally, probably interacts with GlcNAc residues. May promote attachment to both epithelial cell surfaces and chitin. This is GlcNAc-binding protein A from Vibrio campbellii (strain ATCC BAA-1116).